A 352-amino-acid polypeptide reads, in one-letter code: Uroporphyrinogen decarboxylase (352 aa).

Substrate contacts are provided by residues 27–31, Asp-77, Tyr-154, Thr-209, and His-325; that span reads RQAGR.

Belongs to the uroporphyrinogen decarboxylase family. As to quaternary structure, homodimer.

The protein localises to the cytoplasm. The catalysed reaction is uroporphyrinogen III + 4 H(+) = coproporphyrinogen III + 4 CO2. It participates in porphyrin-containing compound metabolism; protoporphyrin-IX biosynthesis; coproporphyrinogen-III from 5-aminolevulinate: step 4/4. Its function is as follows. Catalyzes the decarboxylation of four acetate groups of uroporphyrinogen-III to yield coproporphyrinogen-III. The polypeptide is Uroporphyrinogen decarboxylase (Legionella pneumophila (strain Paris)).